The sequence spans 215 residues: Probable maleylacetoacetate isomerase (215 aa).

Residues 2-85 (MSLILYGYWR…YLDETYPAPR (84 aa)) form the GST N-terminal domain. A GST C-terminal domain is found at 90–215 (RGAERYQVKA…AAPENQPDAC (126 aa)).

This sequence belongs to the GST superfamily. Zeta family.

It catalyses the reaction 4-maleylacetoacetate = 4-fumarylacetoacetate. It participates in amino-acid degradation; L-phenylalanine degradation; acetoacetate and fumarate from L-phenylalanine: step 5/6. The protein is Probable maleylacetoacetate isomerase (maiA) of Vibrio cholerae serotype O1 (strain ATCC 39315 / El Tor Inaba N16961).